Here is a 349-residue protein sequence, read N- to C-terminus: UPF0284 protein MM_0708 (349 aa).

Belongs to the UPF0284 family.

The polypeptide is UPF0284 protein MM_0708 (Methanosarcina mazei (strain ATCC BAA-159 / DSM 3647 / Goe1 / Go1 / JCM 11833 / OCM 88) (Methanosarcina frisia)).